The primary structure comprises 326 residues: GTPase Obg (326 aa).

The 159-residue stretch at 1–159 folds into the Obg domain; that stretch reads MKFVDSAKIY…LEIELELKLM (159 aa). The disordered stretch occupies residues 119–138; that stretch reads EGGKGGKGNPHFASSTRQAP. In terms of domain architecture, OBG-type G spans 160 to 323; that stretch reads ADVGLVGFPN…LKDELWSRVK (164 aa). GTP contacts are provided by residues 166-173, 191-195, 213-216, 280-283, and 304-306; these read GFPNAGKS, FTTLV, DIPG, TKMD, and SSV. Residues Ser173 and Thr193 each contribute to the Mg(2+) site.

This sequence belongs to the TRAFAC class OBG-HflX-like GTPase superfamily. OBG GTPase family. As to quaternary structure, monomer. Mg(2+) is required as a cofactor.

It is found in the cytoplasm. Functionally, an essential GTPase which binds GTP, GDP and possibly (p)ppGpp with moderate affinity, with high nucleotide exchange rates and a fairly low GTP hydrolysis rate. Plays a role in control of the cell cycle, stress response, ribosome biogenesis and in those bacteria that undergo differentiation, in morphogenesis control. The chain is GTPase Obg from Chlorobium phaeobacteroides (strain BS1).